Here is a 142-residue protein sequence, read N- to C-terminus: Type II secretion system core protein G (142 aa).

Residues 1–8 (MRRQSQRG) constitute a propeptide, leader sequence. At F9 the chain carries N-methylphenylalanine. A helical transmembrane segment spans residues 9 to 29 (FTLLEIMVVIVIMGILASLVV). The disordered stretch occupies residues 122 to 142 (SGQDGVPGTDDDIGNWTLSKK).

This sequence belongs to the GSP G family. As to quaternary structure, type II secretion system is composed of four main components: the outer membrane complex, the inner membrane complex, the cytoplasmic secretion ATPase and the periplasm-spanning pseudopilus. Forms homomultimers. Cleaved by the prepilin peptidase. In terms of processing, methylated by prepilin peptidase at the amino group of the N-terminal phenylalanine once the leader sequence is cleaved.

Its subcellular location is the cell inner membrane. Core component of the type II secretion system required for the energy-dependent secretion of extracellular factors such as proteases and toxins from the periplasm. Pseudopilin (pilin-like) protein that polymerizes to form the pseudopilus. Further polymerization triggers pseudopilus growth. This is Type II secretion system core protein G from Klebsiella michiganensis (strain ATCC 8724 / DSM 4798 / JCM 20051 / NBRC 3318 / NRRL B-199 / KCTC 1686 / BUCSAV 143 / CCM 1901).